A 78-amino-acid chain; its full sequence is MSRVCQVTGKRPVTGNNRSHARNATKRRFLPNLQTHRFWVESEKRFVKLRLTAKGMRIIDKKGIDAVLVDIRARGENV.

The disordered stretch occupies residues 1 to 20 (MSRVCQVTGKRPVTGNNRSH).

It belongs to the bacterial ribosomal protein bL28 family.

The chain is Large ribosomal subunit protein bL28 from Vibrio atlanticus (strain LGP32) (Vibrio splendidus (strain Mel32)).